Reading from the N-terminus, the 140-residue chain is Nucleoside diphosphate kinase (140 aa).

ATP-binding residues include Lys-11, Phe-59, Arg-87, Thr-93, Arg-104, and Asn-114. His-117 (pros-phosphohistidine intermediate) is an active-site residue.

Belongs to the NDK family. Homotetramer. It depends on Mg(2+) as a cofactor.

Its subcellular location is the cytoplasm. The catalysed reaction is a 2'-deoxyribonucleoside 5'-diphosphate + ATP = a 2'-deoxyribonucleoside 5'-triphosphate + ADP. It carries out the reaction a ribonucleoside 5'-diphosphate + ATP = a ribonucleoside 5'-triphosphate + ADP. Its function is as follows. Major role in the synthesis of nucleoside triphosphates other than ATP. The ATP gamma phosphate is transferred to the NDP beta phosphate via a ping-pong mechanism, using a phosphorylated active-site intermediate. This Persephonella marina (strain DSM 14350 / EX-H1) protein is Nucleoside diphosphate kinase.